Reading from the N-terminus, the 443-residue chain is 23S rRNA (uracil(1939)-C(5))-methyltransferase RlmD (443 aa).

The 59-residue stretch at 12 to 70 (SKQLSAKVSLQVTRLDHLGAGIAQHNGKVVFIPGVLPGEKAMVQLTEQKKRYSRAKLLN) folds into the TRAM domain. [4Fe-4S] cluster contacts are provided by Cys83, Cys89, Cys92, and Cys171. Residues Gln277, Phe306, Asn311, Glu327, Asp354, and Asp374 each coordinate S-adenosyl-L-methionine. Residue Cys400 is the Nucleophile of the active site.

Belongs to the class I-like SAM-binding methyltransferase superfamily. RNA M5U methyltransferase family. RlmD subfamily.

The catalysed reaction is uridine(1939) in 23S rRNA + S-adenosyl-L-methionine = 5-methyluridine(1939) in 23S rRNA + S-adenosyl-L-homocysteine + H(+). Functionally, catalyzes the formation of 5-methyl-uridine at position 1939 (m5U1939) in 23S rRNA. The chain is 23S rRNA (uracil(1939)-C(5))-methyltransferase RlmD from Shewanella woodyi (strain ATCC 51908 / MS32).